The primary structure comprises 303 residues: Catechol 1,2-dioxygenase (303 aa).

Tyr-156, Tyr-191, His-215, and His-217 together coordinate Fe cation.

Homodimer. The cofactor is Fe(3+).

It carries out the reaction catechol + O2 = cis,cis-muconate + 2 H(+). Its pathway is aromatic compound metabolism; beta-ketoadipate pathway; 5-oxo-4,5-dihydro-2-furylacetate from catechol: step 1/3. Inhibited by Ag(+), Cu(+), Hg(2+) and Pb(2+). Can cleave 4-methylcatechol at lower rates than catechol, but has no activity with 3-methylcatechol, 4-chlorocatechol, 4-carboxycatechol or hydroxyquinol. The polypeptide is Catechol 1,2-dioxygenase (HQD2) (Candida albicans (strain SC5314 / ATCC MYA-2876) (Yeast)).